The primary structure comprises 392 residues: Phosphopentomutase (392 aa).

Mn(2+) is bound by residues D10, D282, H287, D323, H324, and H335.

The protein belongs to the phosphopentomutase family. Requires Mn(2+) as cofactor.

Its subcellular location is the cytoplasm. It carries out the reaction 2-deoxy-alpha-D-ribose 1-phosphate = 2-deoxy-D-ribose 5-phosphate. The catalysed reaction is alpha-D-ribose 1-phosphate = D-ribose 5-phosphate. Its pathway is carbohydrate degradation; 2-deoxy-D-ribose 1-phosphate degradation; D-glyceraldehyde 3-phosphate and acetaldehyde from 2-deoxy-alpha-D-ribose 1-phosphate: step 1/2. Isomerase that catalyzes the conversion of deoxy-ribose 1-phosphate (dRib-1-P) and ribose 1-phosphate (Rib-1-P) to deoxy-ribose 5-phosphate (dRib-5-P) and ribose 5-phosphate (Rib-5-P), respectively. The sequence is that of Phosphopentomutase from Dictyoglomus thermophilum (strain ATCC 35947 / DSM 3960 / H-6-12).